A 367-amino-acid chain; its full sequence is Female-specific protein transformer (367 aa).

The disordered stretch occupies residues 86 to 280; the sequence is ESISSKKIKS…HRHHRSQERS (195 aa). Residues 109–129 are compositionally biased toward polar residues; the sequence is VKQNSPDVTQKFTKKYGSSEN. The segment covering 130–144 has biased composition (basic and acidic residues); it reads PDFRRHSSYEKDNYH. Positions 195 to 223 are enriched in basic residues; that stretch reads NRRRSSHRSRRGSGSPRSRRYTSRHRRRS. Basic and acidic residues predominate over residues 229-238; sequence TSWKHNPEHR. Positions 239-257 are enriched in basic residues; sequence TSRRSRTRSPRGNRSRRRS.

Sex differentiation protein controlling female somatic sexual differentiation. May act by promoting the formation of a splicing enhancer complex. The polypeptide is Female-specific protein transformer (Musca domestica (House fly)).